Here is a 1553-residue protein sequence, read N- to C-terminus: MGFRLALAWTLLVGPWMPMGARNSISWEVQRFDGWYNNLMEHKWGSKGSRLQRLVPASYADGVYQPLGEPHLPNPRDLSNTAMRGPAGQASLRNRTVLGVFFGYHVLSDLVSIEKPGCPAEFLNIHIPPGDPVFDPHKSGDVVLPFQRSRWDPNTGQSPSNPRDLTNEVTGWLDGSAIYGSSHSWSDELRSFSGGQLASGPDPAFPRQAQDPLFMWTPPDPATGQRGPQGLYAFGAEQGNREPFLQALGLLWFRYHNLCAQKLAREHPLWGDEELFQHARKRVIATYQSITMYEWLPSFLRKMPQEYTGYRPFLDPSISPEFLAASEQFFSTMVPPGVYMRNASCHFQGVINRNSSVSRALRVCNSYWSREHPNLQRAEDVDALLLGMASQIAEREDHMVVEDVQDFWPGPLKFSRTDHLASCLQRGRDLGLPSYTKARARLGLPPVTRWQDINPALSRSDGIVLEATAALYNQDLSRLELLPGGLLESYGDPGPLFSTIVLDQFVRLRDGDRYWFENTKNGLFSEKEIAEIRNTSLRDVLVAVTNMTPGALQPNVFFWHAGDPCPQPRQLSTKDLPACAPLIMRDYFKGSGFGFGVTIGTLCCFPLVSLLSAWIVAQLRRRNFKRLQVQNRQSIMCEKLVGGMKALEWQGRKEPCRPVLVHLQSGQIHVMDGRLSVLRTIQLRPPQQVNLILSSNHGRRTLLLKIPKEYDLVLMFDLEEERQVMVENLQSALKESGLSFQEWELREQELMRAAVTREQRSHLLETFFRHLFSQVLDIDQADAGALPLDSSQKVREALTCELSRAEFAESLGLKPQDMFVESMFSLADKDGNGYLSFREFLDILVVFMKGSPEEKSRLMFRMYDFDGNGLISKDEFIRMLRSFIEISNNCLSKAQLTEVVESMFREAGFQDKQELTWEDFHFMLRDHDSELRFTQLCVKGVEVPEVIKDLCRRASYISQEKLCPSPRVSAHCPRSNVDVEVELTPWKLQCPTDTDPPQEIRRRFGKKVTSFQPLLFTEAHREKFQRSRRHQTVQQFKRFVENYRRHIGCLAVFYTIAGGLFLERAYYYAFAAHHMGITDTTRVGIILSRGTAASISFMFSYILLTMCRNLITFLRETFLNRYVPFDAAVDFHRLIASTAIILTVLHSAGHVVNVYLFSISPLSVLSCLFPGLFHDNGSEFPQKYYWWFFQTVPGLTGVMLLLILAIMYVFASHHFRRCSFRGFWLTHHLYILLYMLLIIHGSFALIQLPRFHIFFLVPALIYVGDKLVSLSRKKVEISVVKAELLPSGVTHLQFQRPQGFEYKSGQWVRIACLALGTTEYHPFTLTSAPHEDTLSLHIRAAGPWTTRLREIYSPPTDDNCAKYPKLYLDGPFGEGHQEWHKFEVSVLVGGGIGVTPFASILKDLVFKSSVSCQVFCKKIYFIWVTRTQRQFEWLADIIREVEENDHRDLVSVHIYITQLAEKFDLRTTMLYICERHFQKVLNRSLFTGLRSITHFGRPPFEPFFNSLQEVHPQVRKIGVFSCGPPGMTKNVEKACQLINRQDRTHFSHHYENF.

An N-terminal signal peptide occupies residues 1–21; that stretch reads MGFRLALAWTLLVGPWMPMGA. At 22-596 the chain is on the extracellular side; it reads RNSISWEVQR…YFKGSGFGFG (575 aa). The interval 26–593 is peroxidase-like; mediates peroxidase activity; that stretch reads SWEVQRFDGW…MRDYFKGSGF (568 aa). N-linked (GlcNAc...) asparagine glycosylation is found at asparagine 94, asparagine 342, asparagine 354, and asparagine 534. A helical membrane pass occupies residues 597 to 617; sequence VTIGTLCCFPLVSLLSAWIVA. Topologically, residues 618-1046 are cytoplasmic; sequence QLRRRNFKRL…KRFVENYRRH (429 aa). EF-hand domains lie at 815 to 850, 851 to 886, and 895 to 930; these read PQDM…FMKG, SPEE…FIEI, and QLTE…HDSE. 9 residues coordinate Ca(2+): aspartate 828, aspartate 830, asparagine 832, tyrosine 834, glutamate 839, aspartate 864, aspartate 866, asparagine 868, and glutamate 875. Residues 956-1250 are interaction with TXNDC11; it reads YISQEKLCPS…GSFALIQLPR (295 aa). Residues 1047–1067 form a helical membrane-spanning segment; the sequence is IGCLAVFYTIAGGLFLERAYY. Residues 1068–1082 are Extracellular-facing; it reads YAFAAHHMGITDTTR. The chain crosses the membrane as a helical span at residues 1083 to 1103; sequence VGIILSRGTAASISFMFSYIL. The region spanning 1089-1271 is the Ferric oxidoreductase domain; that stretch reads RGTAASISFM…YVGDKLVSLS (183 aa). At 1104-1138 the chain is on the cytoplasmic side; sequence LTMCRNLITFLRETFLNRYVPFDAAVDFHRLIAST. The helical transmembrane segment at 1139-1159 threads the bilayer; sequence AIILTVLHSAGHVVNVYLFSI. Over 1160-1190 the chain is Extracellular; it reads SPLSVLSCLFPGLFHDNGSEFPQKYYWWFFQ. A helical membrane pass occupies residues 1191–1211; that stretch reads TVPGLTGVMLLLILAIMYVFA. At 1212 to 1228 the chain is on the cytoplasmic side; the sequence is SHHFRRCSFRGFWLTHH. A helical membrane pass occupies residues 1229-1249; the sequence is LYILLYMLLIIHGSFALIQLP. Position 1250 (arginine 1250) is a topological domain, extracellular. Residues 1251 to 1271 traverse the membrane as a helical segment; that stretch reads FHIFFLVPALIYVGDKLVSLS. The 107-residue stretch at 1272–1378 folds into the FAD-binding FR-type domain; it reads RKKVEISVVK…DGPFGEGHQE (107 aa). At 1272-1553 the chain is on the cytoplasmic side; the sequence is RKKVEISVVK…THFSHHYENF (282 aa).

In the N-terminal section; belongs to the peroxidase family. In terms of assembly, interacts with TXNDC11, TPO and CYBA. In terms of processing, N-glycosylated. In terms of tissue distribution, specifically expressed in thyroid.

The protein localises to the apical cell membrane. The enzyme catalyses NADH + O2 + H(+) = H2O2 + NAD(+). The catalysed reaction is NADPH + O2 + H(+) = H2O2 + NADP(+). It participates in hormone biosynthesis; thyroid hormone biosynthesis. The NADPH oxidase activity is calcium-dependent. Peroxidase activity is inhibited by aminobenzohydrazide. Its function is as follows. Generates hydrogen peroxide which is required for the activity of thyroid peroxidase/TPO and lactoperoxidase/LPO. Plays a role in thyroid hormones synthesis and lactoperoxidase-mediated antimicrobial defense at the surface of mucosa. May have its own peroxidase activity through its N-terminal peroxidase-like domain. In Sus scrofa (Pig), this protein is Dual oxidase 1 (DUOX1).